Consider the following 230-residue polypeptide: UPF0173 metal-dependent hydrolase Sca_1312 (230 aa).

This sequence belongs to the UPF0173 family.

The polypeptide is UPF0173 metal-dependent hydrolase Sca_1312 (Staphylococcus carnosus (strain TM300)).